The chain runs to 370 residues: UDP-N-acetylglucosamine--N-acetylmuramyl-(pentapeptide) pyrophosphoryl-undecaprenol N-acetylglucosamine transferase (370 aa).

Residues 10-12 (TGG), asparagine 126, serine 200, isoleucine 255, and glutamine 300 contribute to the UDP-N-acetyl-alpha-D-glucosamine site.

It belongs to the glycosyltransferase 28 family. MurG subfamily.

The protein localises to the cell membrane. The enzyme catalyses Mur2Ac(oyl-L-Ala-gamma-D-Glu-L-Lys-D-Ala-D-Ala)-di-trans,octa-cis-undecaprenyl diphosphate + UDP-N-acetyl-alpha-D-glucosamine = beta-D-GlcNAc-(1-&gt;4)-Mur2Ac(oyl-L-Ala-gamma-D-Glu-L-Lys-D-Ala-D-Ala)-di-trans,octa-cis-undecaprenyl diphosphate + UDP + H(+). It functions in the pathway cell wall biogenesis; peptidoglycan biosynthesis. In terms of biological role, cell wall formation. Catalyzes the transfer of a GlcNAc subunit on undecaprenyl-pyrophosphoryl-MurNAc-pentapeptide (lipid intermediate I) to form undecaprenyl-pyrophosphoryl-MurNAc-(pentapeptide)GlcNAc (lipid intermediate II). The polypeptide is UDP-N-acetylglucosamine--N-acetylmuramyl-(pentapeptide) pyrophosphoryl-undecaprenol N-acetylglucosamine transferase (Lactobacillus gasseri (strain ATCC 33323 / DSM 20243 / BCRC 14619 / CIP 102991 / JCM 1131 / KCTC 3163 / NCIMB 11718 / NCTC 13722 / AM63)).